We begin with the raw amino-acid sequence, 249 residues long: Type III pantothenate kinase (249 aa).

Asp-6–Lys-13 lines the ATP pocket. Substrate-binding positions include Tyr-93 and Gly-100–Arg-103. The active-site Proton acceptor is the Asp-102. Asp-122 contributes to the K(+) binding site. Residue Thr-125 participates in ATP binding. Substrate is bound at residue Thr-181.

It belongs to the type III pantothenate kinase family. Homodimer. The cofactor is NH4(+). Requires K(+) as cofactor.

The protein resides in the cytoplasm. The enzyme catalyses (R)-pantothenate + ATP = (R)-4'-phosphopantothenate + ADP + H(+). It participates in cofactor biosynthesis; coenzyme A biosynthesis; CoA from (R)-pantothenate: step 1/5. In terms of biological role, catalyzes the phosphorylation of pantothenate (Pan), the first step in CoA biosynthesis. In Pseudomonas fluorescens (strain SBW25), this protein is Type III pantothenate kinase.